Reading from the N-terminus, the 250-residue chain is tRNA (guanine-N(1)-)-methyltransferase (250 aa).

S-adenosyl-L-methionine contacts are provided by residues Gly-113 and 134 to 139 (IGDYVL).

The protein belongs to the RNA methyltransferase TrmD family. In terms of assembly, homodimer.

The protein localises to the cytoplasm. It catalyses the reaction guanosine(37) in tRNA + S-adenosyl-L-methionine = N(1)-methylguanosine(37) in tRNA + S-adenosyl-L-homocysteine + H(+). Functionally, specifically methylates guanosine-37 in various tRNAs. This Buchnera aphidicola subsp. Baizongia pistaciae (strain Bp) protein is tRNA (guanine-N(1)-)-methyltransferase.